A 317-amino-acid polypeptide reads, in one-letter code: Xylose/arabinose import permease protein XacH (317 aa).

A run of 6 helical transmembrane segments spans residues 40-60 (GIPF…NFAI), 98-118 (LVLL…LAIL), 132-152 (VYLL…LWMF), 179-199 (IALG…TMVV), 241-261 (AAVV…ALVG), and 290-310 (AAIA…YLYY). The ABC transmembrane type-1 domain occupies 94 to 309 (AQNNLVLLVG…ALGVIGPYLY (216 aa)).

This sequence belongs to the binding-protein-dependent transport system permease family. The complex is composed of two ATP-binding proteins (XacJ and XacK), two transmembrane proteins (XacH and XacI) and a solute-binding protein (XacG).

The protein localises to the cell membrane. Its function is as follows. Part of the ABC transporter complex XacGHIJK involved in the uptake of xylose and arabinose. Responsible for the translocation of the substrate across the membrane. This Haloferax volcanii (strain ATCC 29605 / DSM 3757 / JCM 8879 / NBRC 14742 / NCIMB 2012 / VKM B-1768 / DS2) (Halobacterium volcanii) protein is Xylose/arabinose import permease protein XacH.